We begin with the raw amino-acid sequence, 129 residues long: Glycine cleavage system H protein (129 aa).

Residues 24–106 enclose the Lipoyl-binding domain; the sequence is LIRVGISAFA…HGAGWLLVVR (83 aa). Residue Lys-65 is modified to N6-lipoyllysine.

It belongs to the GcvH family. In terms of assembly, the glycine cleavage system is composed of four proteins: P, T, L and H. (R)-lipoate serves as cofactor.

Functionally, the glycine cleavage system catalyzes the degradation of glycine. The H protein shuttles the methylamine group of glycine from the P protein to the T protein. This is Glycine cleavage system H protein from Synechococcus sp. (strain CC9902).